The following is a 412-amino-acid chain: Peptidyl-prolyl cis-trans isomerase FKBP8 (412 aa).

The disordered stretch occupies residues 1-68 (MASCAEPSEP…GQPPAEEAEQ (68 aa)). The segment covering 22–50 (EDFEVLDGVEDAEGEEEEEEEEEEEDDLS) has biased composition (acidic residues). Residues 120-204 (GQVVTVHLQT…CLEVTLKTAV (85 aa)) enclose the PPIase FKBP-type domain. Residues Asp149 and Asp151 each coordinate Ca(2+). A TPR 1 repeat occupies 221 to 254 (ANRKRECGNAHYQRADFVLAANSYDLAIKAITSS). Residues Lys249, Lys271, Lys273, and Lys284 each participate in a glycyl lysine isopeptide (Lys-Gly) (interchain with G-Cter in ubiquitin) cross-link. TPR repeat units follow at residues 272-305 (VKCLNNLAASQLKLDHYRAALRSCSLVLEHQPDN) and 306-339 (IKALFRKGKVLAQQGEYSEAIPILRAALKLEPSN). Ser296 bears the Phosphoserine mark. Residues Lys307, Lys314, Lys334, Lys340, Lys348, Lys351, and Lys352 each participate in a glycyl lysine isopeptide (Lys-Gly) (interchain with G-Cter in ubiquitin) cross-link. Residues 390 to 410 (WLFGATAVALGGVALSVVIAA) form a helical membrane-spanning segment.

In terms of assembly, homomultimers or heteromultimers (Potential). Forms heterodimer with calmodulin. When activated by calmodulin and calcium, interacts with the BH4 domain of BCL2 and weakly with BCL2L1/BCLX isoform Bcl-X(L). Does not bind and inhibit calcineurin. Interacts with ZFYVE27; may negatively regulate ZFYVE27 phosphorylation. (Microbial infection) Interacts with hepatitis C/HCV protein NS5A. It depends on Ca(2+) as a cofactor. Ubiquitinated by PRKN during mitophagy, leading to its degradation and enhancement of mitophagy. Deubiquitinated by USP30. Widely expressed. Highest levels seen in the brain. Highly abundant in the retina.

Its subcellular location is the mitochondrion. The protein localises to the mitochondrion membrane. It carries out the reaction [protein]-peptidylproline (omega=180) = [protein]-peptidylproline (omega=0). Functionally, constitutively inactive PPiase, which becomes active when bound to calmodulin and calcium. Seems to act as a chaperone for BCL2, targets it to the mitochondria and modulates its phosphorylation state. The BCL2/FKBP8/calmodulin/calcium complex probably interferes with the binding of BCL2 to its targets. The active form of FKBP8 may therefore play a role in the regulation of apoptosis. Involved in the inhibition of viral infection by influenza A viruses (IAV). This chain is Peptidyl-prolyl cis-trans isomerase FKBP8 (FKBP8), found in Homo sapiens (Human).